We begin with the raw amino-acid sequence, 391 residues long: GTPase Obg (391 aa).

The 159-residue stretch at 1 to 159 (MKFIDEALIR…RDLLLELMLL (159 aa)) folds into the Obg domain. The region spanning 160-333 (ADVGMLGLPN…LTRDIMDFIE (174 aa)) is the OBG-type G domain. Residues 166 to 173 (GLPNAGKS), 191 to 195 (FTTLV), 213 to 216 (DIPG), 283 to 286 (NKID), and 314 to 316 (SAA) contribute to the GTP site. Mg(2+) is bound by residues S173 and T193.

Belongs to the TRAFAC class OBG-HflX-like GTPase superfamily. OBG GTPase family. In terms of assembly, monomer. It depends on Mg(2+) as a cofactor.

It localises to the cytoplasm. In terms of biological role, an essential GTPase which binds GTP, GDP and possibly (p)ppGpp with moderate affinity, with high nucleotide exchange rates and a fairly low GTP hydrolysis rate. Plays a role in control of the cell cycle, stress response, ribosome biogenesis and in those bacteria that undergo differentiation, in morphogenesis control. This is GTPase Obg from Haemophilus ducreyi (strain 35000HP / ATCC 700724).